We begin with the raw amino-acid sequence, 593 residues long: Proline dehydrogenase 1, mitochondrial (593 aa).

The interval 24–44 is disordered; that stretch reads PAAREQPAAGPGAEPVCGPAE. An N6-acetyllysine mark is found at Lys-368 and Lys-479.

This sequence belongs to the proline oxidase family. Requires FAD as cofactor.

It is found in the mitochondrion matrix. It carries out the reaction L-proline + a quinone = (S)-1-pyrroline-5-carboxylate + a quinol + H(+). It functions in the pathway amino-acid degradation; L-proline degradation into L-glutamate; L-glutamate from L-proline: step 1/2. Converts proline to delta-1-pyrroline-5-carboxylate. The protein is Proline dehydrogenase 1, mitochondrial of Bos taurus (Bovine).